Here is a 944-residue protein sequence, read N- to C-terminus: Ras guanine nucleotide exchange factor O (944 aa).

The segment at 16 to 54 (CGICQNLFKDPNTLIPCGHAFCLDCLTTNASIKNCIQCK) adopts an RING-type zinc-finger fold. The interval 80–102 (NNSNNNSNGENTNNNNNIINNER) is disordered. A B box-type zinc finger spans residues 152–192 (NNIRYCMEHYEHYYAFCNDCQAPVCPSCLLTTHNRHGMIPL). 4 residues coordinate Zn(2+): C157, H160, C179, and H184. Coiled-coil stretches lie at residues 200 to 234 (KMKEYRDIVQSFKTKMSQYKDNITLYQKEIELLDS) and 271 to 303 (ASHMELTDRSSTLENEISEMEKLIGNGTDKFKD). An N-terminal Ras-GEF domain is found at 402 to 528 (EEFEVKYGSL…LLLNSNENSP (127 aa)). Disordered regions lie at residues 530–562 (ITSSQSLSSQSLYSQTNNNNNNNNNNSNNLQPT), 587–623 (TNNGTCKIQNSPPKNYQQSNYSSIFNGPSSSSSSSPS), and 644–670 (ESPLNSPRNNNNNNNNNSPRSSSFGAS). Positions 590 to 604 (GTCKIQNSPPKNYQQ) are enriched in polar residues. Low complexity-rich tracts occupy residues 605-623 (SNYSSIFNGPSSSSSSSPS) and 648-670 (NSPRNNNNNNNNNSPRSSSFGAS). The Ras-GEF domain occupies 727 to 944 (DEFEIAKQLT…EYLNVHIDEL (218 aa)).

Functionally, promotes the exchange of Ras-bound GDP by GTP. The chain is Ras guanine nucleotide exchange factor O (gefO) from Dictyostelium discoideum (Social amoeba).